Consider the following 489-residue polypeptide: Aspartyl/glutamyl-tRNA(Asn/Gln) amidotransferase subunit B (489 aa).

It belongs to the GatB/GatE family. GatB subfamily. Heterotrimer of A, B and C subunits.

It catalyses the reaction L-glutamyl-tRNA(Gln) + L-glutamine + ATP + H2O = L-glutaminyl-tRNA(Gln) + L-glutamate + ADP + phosphate + H(+). The catalysed reaction is L-aspartyl-tRNA(Asn) + L-glutamine + ATP + H2O = L-asparaginyl-tRNA(Asn) + L-glutamate + ADP + phosphate + 2 H(+). Allows the formation of correctly charged Asn-tRNA(Asn) or Gln-tRNA(Gln) through the transamidation of misacylated Asp-tRNA(Asn) or Glu-tRNA(Gln) in organisms which lack either or both of asparaginyl-tRNA or glutaminyl-tRNA synthetases. The reaction takes place in the presence of glutamine and ATP through an activated phospho-Asp-tRNA(Asn) or phospho-Glu-tRNA(Gln). The chain is Aspartyl/glutamyl-tRNA(Asn/Gln) amidotransferase subunit B from Polynucleobacter asymbioticus (strain DSM 18221 / CIP 109841 / QLW-P1DMWA-1) (Polynucleobacter necessarius subsp. asymbioticus).